A 258-amino-acid chain; its full sequence is Phosphate import ATP-binding protein PstB (258 aa).

An ABC transporter domain is found at 5 to 247 (LDLKDVNIYY…EKIFSNPRQK (243 aa)). Residue 37 to 44 (GPSGCGKS) participates in ATP binding.

The protein belongs to the ABC transporter superfamily. Phosphate importer (TC 3.A.1.7) family. As to quaternary structure, the complex is composed of two ATP-binding proteins (PstB), two transmembrane proteins (PstC and PstA) and a solute-binding protein (PstS).

Its subcellular location is the cell membrane. The enzyme catalyses phosphate(out) + ATP + H2O = ADP + 2 phosphate(in) + H(+). Part of the ABC transporter complex PstSACB involved in phosphate import. Responsible for energy coupling to the transport system. This is Phosphate import ATP-binding protein PstB from Mycolicibacterium smegmatis (Mycobacterium smegmatis).